The primary structure comprises 306 residues: Porphobilinogen deaminase (306 aa).

C241 carries the post-translational modification S-(dipyrrolylmethanemethyl)cysteine.

It belongs to the HMBS family. In terms of assembly, monomer. Dipyrromethane is required as a cofactor.

The enzyme catalyses 4 porphobilinogen + H2O = hydroxymethylbilane + 4 NH4(+). It participates in porphyrin-containing compound metabolism; protoporphyrin-IX biosynthesis; coproporphyrinogen-III from 5-aminolevulinate: step 2/4. Functionally, tetrapolymerization of the monopyrrole PBG into the hydroxymethylbilane pre-uroporphyrinogen in several discrete steps. This Acidithiobacillus ferrooxidans (strain ATCC 23270 / DSM 14882 / CIP 104768 / NCIMB 8455) (Ferrobacillus ferrooxidans (strain ATCC 23270)) protein is Porphobilinogen deaminase.